The chain runs to 365 residues: Peptide chain release factor 2 (365 aa).

Gln-252 carries the post-translational modification N5-methylglutamine.

The protein belongs to the prokaryotic/mitochondrial release factor family. Post-translationally, methylated by PrmC. Methylation increases the termination efficiency of RF2.

Its subcellular location is the cytoplasm. Its function is as follows. Peptide chain release factor 2 directs the termination of translation in response to the peptide chain termination codons UGA and UAA. This is Peptide chain release factor 2 from Escherichia coli (strain K12 / MC4100 / BW2952).